Reading from the N-terminus, the 154-residue chain is Cytochrome c-550 (154 aa).

Residues 1-20 form the signal peptide; sequence MKISIYATLAALSLALPAVA. Gln-21 bears the Pyrrolidone carboxylic acid mark. Residues Cys-35, Cys-38, His-39, and Met-120 each coordinate heme c. The propeptide occupies 150–154; it reads EGAAN.

Post-translationally, binds 1 heme c group covalently per subunit.

The protein is Cytochrome c-550 (cyc) of Paracoccus versutus (Thiobacillus versutus).